Consider the following 192-residue polypeptide: Large ribosomal subunit protein bL25 (192 aa).

It belongs to the bacterial ribosomal protein bL25 family. CTC subfamily. Part of the 50S ribosomal subunit; part of the 5S rRNA/L5/L18/L25 subcomplex. Contacts the 5S rRNA. Binds to the 5S rRNA independently of L5 and L18.

Functionally, this is one of the proteins that binds to the 5S RNA in the ribosome where it forms part of the central protuberance. This is Large ribosomal subunit protein bL25 from Porphyromonas gingivalis (strain ATCC 33277 / DSM 20709 / CIP 103683 / JCM 12257 / NCTC 11834 / 2561).